The following is a 237-amino-acid chain: Cyclic-di-GMP-binding biofilm dispersal mediator protein (237 aa).

Residue 10 to 34 (LILGGSRGIGAAIVRRFVTDGANVR) participates in NAD(+) binding. Residue serine 132 participates in substrate binding. Catalysis depends on tyrosine 146, which acts as the Proton acceptor.

It belongs to the short-chain dehydrogenases/reductases (SDR) family.

In terms of biological role, increases biofilm dispersal. Acts by binding directly to the signaling molecule cyclic-di-GMP, which decreases the intracellular concentration of cyclic-di-GMP and leads to biofilm dispersal. Also controls other biofilm-related phenotypes such as cell motility, cell size, cell aggregation and production of extracellular DNA and extracellular polysaccharides (EPS). Does not act as a phosphodiesterase. The sequence is that of Cyclic-di-GMP-binding biofilm dispersal mediator protein (bdcA) from Escherichia coli (strain K12).